The sequence spans 1958 residues: Rho GTPase-activating protein 21 (1958 aa).

Positions 1–42 are disordered; sequence MMATRRTGLSEGDGDKLKACEVSKNKDGKEQSETVSLSEDET. Residues 13–32 show a composition bias toward basic and acidic residues; sequence DGDKLKACEVSKNKDGKEQS. Residues serine 36 and serine 57 each carry the phosphoserine modification. One can recognise a PDZ domain in the interval 50–159; sequence TVTLKRTSQG…TLELSVMPKD (110 aa). 3 stretches are compositionally biased toward polar residues: residues 286 to 295, 306 to 325, and 418 to 436; these read SNRNNHTGPS, SEQT…LSIP, and ASQS…TTLQ. Disordered regions lie at residues 286–325 and 418–458; these read SNRN…LSIP and ASQS…QRSV. Over residues 448–458 the composition is skewed to low complexity; it reads PQSVQIRQRSV. Position 459 is a phosphoserine (serine 459). 2 positions are modified to omega-N-methylarginine: arginine 554 and arginine 575. Phosphoserine is present on residues serine 612, serine 616, and serine 625. Over residues 659–687 the composition is skewed to polar residues; sequence SLLNQQTWVRTDSAPDQQVETGKSPSLSG. The tract at residues 659-751 is disordered; that stretch reads SLLNQQTWVR…PSGRQTPQPL (93 aa). Serine 717 is modified (phosphoserine). Over residues 729 to 742 the composition is skewed to basic and acidic residues; that stretch reads LDNKEAVILREKPP. Threonine 747 carries the post-translational modification Phosphothreonine. Phosphoserine is present on residues serine 857, serine 862, and serine 881. The segment at 859-885 is disordered; sequence DHESVGPPSLDAQPNSKTERSKSYDEG. The segment covering 875-885 has biased composition (basic and acidic residues); the sequence is KTERSKSYDEG. Tyrosine 882 carries the post-translational modification Phosphotyrosine. Phosphoserine occurs at positions 924, 926, 954, 1099, and 1115. The segment at 930 to 1097 is interaction with ARF1 and ARF6; it reads SDAAKEGWLH…AKSEPKTQSP (168 aa). The PH domain occupies 931–1040; that stretch reads DAAKEGWLHF…WIKTIQESSN (110 aa). Residues 1086–1133 are disordered; it reads LGAKSEPKTQSPHSPKEESERKLLSKDDTSPPKDKGTWRKGIPSIMRK. The span at 1099-1122 shows a compositional bias: basic and acidic residues; that stretch reads SPKEESERKLLSKDDTSPPKDKGT. The Rho-GAP domain maps to 1147 to 1339; the sequence is VRLDDCPPAH…TLIQHHDWFF (193 aa). Disordered regions lie at residues 1348 to 1401, 1418 to 1575, 1598 to 1642, and 1655 to 1686; these read LTTV…GSGK, SRKR…KHSE, SLDS…SEFP, and RGKL…SSLD. The span at 1349-1362 shows a compositional bias: polar residues; that stretch reads TTVQEESTVDSQPV. A compositionally biased stretch (low complexity) spans 1383–1401; that stretch reads SDSATSDSTKSKGSWGSGK. 3 positions are modified to phosphoserine: serine 1418, serine 1432, and serine 1433. 2 stretches are compositionally biased toward basic and acidic residues: residues 1441 to 1466 and 1477 to 1493; these read FFKK…ETLG and NSTR…KISL. Residue lysine 1444 forms a Glycyl lysine isopeptide (Lys-Gly) (interchain with G-Cter in SUMO) linkage. Serine 1504 is subject to Phosphoserine. Position 1516 is a phosphothreonine (threonine 1516). Serine 1527 carries the phosphoserine modification. The span at 1544-1559 shows a compositional bias: low complexity; the sequence is SDSGTLLSTSSQASLA. Residues 1592 to 1861 form an interaction with CTNNA1 region; it reads SATYLTSLDS…WLARERLRTS (270 aa). Residues 1603-1612 are compositionally biased toward polar residues; sequence RLSPEVQSVA. A compositionally biased stretch (basic and acidic residues) spans 1624–1634; the sequence is SELISEGRPVE. Serine 1669 carries the phosphoserine modification. A compositionally biased stretch (polar residues) spans 1671–1686; that stretch reads GSELSCTEGSLTSSLD. Threonine 1682 carries the phosphothreonine modification. Serine 1742 carries the post-translational modification Phosphoserine. The interval 1860–1958 is disordered; it reads TSTSDLSRGE…GSKAEFHPCL (99 aa). Over residues 1874–1909 the composition is skewed to polar residues; sequence QTENPSTREIATTDTPLSLHCNTGSSSSTLASTNRP. Residue serine 1917 is modified to Phosphoserine. The segment covering 1918–1931 has biased composition (polar residues); the sequence is PDQINGESFQNVSK.

As to quaternary structure, interacts with GTP-bound ARF1 and ARF6. Interacts with CTNNA1. Sumoylated with SUMO2 and SUMO3 in proliferating lymphocytes. In terms of tissue distribution, widely expressed with higher expression in brain, heart, skeletal muscle and placenta.

It is found in the golgi apparatus membrane. The protein resides in the cell junction. It localises to the cytoplasmic vesicle membrane. The protein localises to the cytoplasm. Its subcellular location is the cytoskeleton. Its function is as follows. Functions as a GTPase-activating protein (GAP) for RHOA and CDC42. Downstream partner of ARF1 which may control Golgi apparatus structure and function. Also required for CTNNA1 recruitment to adherens junctions. The polypeptide is Rho GTPase-activating protein 21 (ARHGAP21) (Homo sapiens (Human)).